The sequence spans 105 residues: Protamine-2 (105 aa).

The segment at 1–74 (MVRYRMRSPS…RRSCRRRRRH (74 aa)) is disordered. Residues Ser8 and Ser10 each carry the phosphoserine modification. Over residues 33-42 (NPERVEDYGR) the composition is skewed to basic and acidic residues. A compositionally biased stretch (basic residues) spans 43-74 (THRGHHRHRRCSRKRLHRIHKRRRSCRRRRRH).

The protein belongs to the protamine P2 family. In terms of assembly, interacts with TDRP. Post-translationally, proteolytic processing into mature chains is required for histone eviction during spermatogenesis. Transition proteins (TNP1 and TNP2) are required for processing. As to expression, testis.

It is found in the nucleus. Its subcellular location is the chromosome. Its function is as follows. Protamines substitute for histones in the chromatin of sperm during the haploid phase of spermatogenesis. They compact sperm DNA into a highly condensed, stable and inactive complex. The protein is Protamine-2 (Prm2) of Rattus tunneyi (Tunney's rat).